The primary structure comprises 212 residues: Large ribosomal subunit protein uL3 (212 aa).

The disordered stretch occupies residues 136-155 (THGNSLSHRSNGSIGQNQTP). Gln153 carries the post-translational modification N5-methylglutamine.

This sequence belongs to the universal ribosomal protein uL3 family. In terms of assembly, part of the 50S ribosomal subunit. Forms a cluster with proteins L14 and L19. Post-translationally, methylated by PrmB.

In terms of biological role, one of the primary rRNA binding proteins, it binds directly near the 3'-end of the 23S rRNA, where it nucleates assembly of the 50S subunit. This chain is Large ribosomal subunit protein uL3, found in Shewanella oneidensis (strain ATCC 700550 / JCM 31522 / CIP 106686 / LMG 19005 / NCIMB 14063 / MR-1).